We begin with the raw amino-acid sequence, 1002 residues long: Spore wall protein 2 (1002 aa).

Positions 1-18 are cleaved as a signal peptide; the sequence is MIKLSLLLSLASFTAVLA. Asparagine 308 carries an N-linked (GlcNAc...) asparagine glycan. Positions 349–1002 are disordered; that stretch reads TSSGFEDAEE…DNTEEGEETT (654 aa). Acidic residues predominate over residues 354 to 1002; it reads EDAEEGEDKD…DNTEEGEETT (649 aa). 24 repeat units span residues 357–368, 369–380, 381–392, 393–404, 405–416, 417–428, 429–440, 441–452, 453–464, 465–476, 477–488, 489–500, 501–512, 513–524, 525–536, 537–548, 549–560, 561–572, 576–587, 588–599, 600–611, 615–626, 627–638, and 639–650. The 50 X 12 AA tandem repeats of E-E-G-E-D-K-D-N-T-G-E-G stretch occupies residues 357-998; sequence EEGEDKDNTG…GEDKDNTEEG (642 aa). A 25; degenerate repeat occupies 651 to 662; the sequence is EEGEDKDNTGDA. One copy of the 26; degenerate repeat lies at 663-674; it reads EEGEEGEDKDST. Repeat copies occupy residues 678 to 689, 693 to 704, 708 to 719, 723 to 734, 735 to 746, 747 to 758, 759 to 770, 774 to 785, 786 to 797, 801 to 812, 816 to 827, 831 to 842, 843 to 854, 855 to 866, 867 to 878, 882 to 893, 894 to 905, 906 to 915, 918 to 929, 930 to 941, 942 to 953, and 957 to 969. The stretch at 972–983 is one 49; degenerate repeat; it reads EEGEDKDNTGDA. Residues 987 to 998 form a 50; degenerate repeat; that stretch reads EEGEDKDNTEEG.

In terms of assembly, component of a complex composed of at least SWP1 and SWP2.

It localises to the spore. Its subcellular location is the perispore. Functionally, spore wall component. This chain is Spore wall protein 2 (SWP2), found in Encephalitozoon intestinalis (Microsporidian parasite).